Consider the following 443-residue polypeptide: D-inositol 3-phosphate glycosyltransferase (443 aa).

Histidine 26 is a 1D-myo-inositol 3-phosphate binding site. Residues 32–33 (QP) and glycine 40 contribute to the UDP-N-acetyl-alpha-D-glucosamine site. 1D-myo-inositol 3-phosphate is bound by residues 37–42 (DAGGMN), lysine 95, tyrosine 128, threonine 152, and arginine 172. UDP-N-acetyl-alpha-D-glucosamine-binding residues include arginine 246, lysine 251, and glutamine 304. Mg(2+) is bound by residues tyrosine 313, arginine 314, and alanine 316. 2 residues coordinate UDP-N-acetyl-alpha-D-glucosamine: glutamate 326 and glutamate 334. Threonine 340 lines the Mg(2+) pocket.

It belongs to the glycosyltransferase group 1 family. MshA subfamily. In terms of assembly, homodimer.

The catalysed reaction is 1D-myo-inositol 3-phosphate + UDP-N-acetyl-alpha-D-glucosamine = 1D-myo-inositol 2-acetamido-2-deoxy-alpha-D-glucopyranoside 3-phosphate + UDP + H(+). Its function is as follows. Catalyzes the transfer of a N-acetyl-glucosamine moiety to 1D-myo-inositol 3-phosphate to produce 1D-myo-inositol 2-acetamido-2-deoxy-glucopyranoside 3-phosphate in the mycothiol biosynthesis pathway. This Mycobacteroides abscessus (strain ATCC 19977 / DSM 44196 / CCUG 20993 / CIP 104536 / JCM 13569 / NCTC 13031 / TMC 1543 / L948) (Mycobacterium abscessus) protein is D-inositol 3-phosphate glycosyltransferase.